We begin with the raw amino-acid sequence, 160 residues long: Lipoprotein signal peptidase (160 aa).

3 consecutive transmembrane segments (helical) span residues 13-33, 72-92, and 104-124; these read IYITTIIFILILDISSKRLII, WFLSTVSILTILVMTRIITKL, and SLIIAGATGNLIDRIFYGFVV. Residues Asp125 and Asp143 contribute to the active site. The chain crosses the membrane as a helical span at residues 134–154; it reads WHFATFNIADCSIFIGIIILM.

This sequence belongs to the peptidase A8 family.

Its subcellular location is the cell inner membrane. The enzyme catalyses Release of signal peptides from bacterial membrane prolipoproteins. Hydrolyzes -Xaa-Yaa-Zaa-|-(S,diacylglyceryl)Cys-, in which Xaa is hydrophobic (preferably Leu), and Yaa (Ala or Ser) and Zaa (Gly or Ala) have small, neutral side chains.. It functions in the pathway protein modification; lipoprotein biosynthesis (signal peptide cleavage). This protein specifically catalyzes the removal of signal peptides from prolipoproteins. This Buchnera aphidicola subsp. Acyrthosiphon pisum (strain APS) (Acyrthosiphon pisum symbiotic bacterium) protein is Lipoprotein signal peptidase.